The following is a 572-amino-acid chain: Proline--tRNA ligase (572 aa).

The protein belongs to the class-II aminoacyl-tRNA synthetase family. ProS type 1 subfamily. In terms of assembly, homodimer.

Its subcellular location is the cytoplasm. It catalyses the reaction tRNA(Pro) + L-proline + ATP = L-prolyl-tRNA(Pro) + AMP + diphosphate. Functionally, catalyzes the attachment of proline to tRNA(Pro) in a two-step reaction: proline is first activated by ATP to form Pro-AMP and then transferred to the acceptor end of tRNA(Pro). As ProRS can inadvertently accommodate and process non-cognate amino acids such as alanine and cysteine, to avoid such errors it has two additional distinct editing activities against alanine. One activity is designated as 'pretransfer' editing and involves the tRNA(Pro)-independent hydrolysis of activated Ala-AMP. The other activity is designated 'posttransfer' editing and involves deacylation of mischarged Ala-tRNA(Pro). The misacylated Cys-tRNA(Pro) is not edited by ProRS. The protein is Proline--tRNA ligase of Salmonella choleraesuis (strain SC-B67).